The chain runs to 312 residues: HPr kinase/phosphorylase (312 aa).

Active-site residues include histidine 141 and lysine 162. 156 to 163 contributes to the ATP binding site; sequence GDSGIGKS. Serine 163 contributes to the Mg(2+) binding site. Aspartate 180 serves as the catalytic Proton acceptor; for phosphorylation activity. Proton donor; for dephosphorylation activity. The segment at 204–213 is important for the catalytic mechanism of both phosphorylation and dephosphorylation; that stretch reads LEIRGVGIID. Glutamate 205 contributes to the Mg(2+) binding site. Arginine 246 is an active-site residue. Residues 267–272 are important for the catalytic mechanism of dephosphorylation; sequence PVRVGR.

This sequence belongs to the HPrK/P family. In terms of assembly, homohexamer. Mg(2+) is required as a cofactor.

The catalysed reaction is [HPr protein]-L-serine + ATP = [HPr protein]-O-phospho-L-serine + ADP + H(+). The enzyme catalyses [HPr protein]-O-phospho-L-serine + phosphate + H(+) = [HPr protein]-L-serine + diphosphate. In terms of biological role, catalyzes the ATP- as well as the pyrophosphate-dependent phosphorylation of a specific serine residue in HPr, a phosphocarrier protein of the phosphoenolpyruvate-dependent sugar phosphotransferase system (PTS). HprK/P also catalyzes the pyrophosphate-producing, inorganic phosphate-dependent dephosphorylation (phosphorolysis) of seryl-phosphorylated HPr (P-Ser-HPr). The two antagonistic activities of HprK/P are regulated by several intracellular metabolites, which change their concentration in response to the absence or presence of rapidly metabolisable carbon sources (glucose, fructose, etc.) in the growth medium. Therefore, by controlling the phosphorylation state of HPr, HPrK/P is a sensor enzyme that plays a major role in the regulation of carbon metabolism and sugar transport: it mediates carbon catabolite repression (CCR), and regulates PTS-catalyzed carbohydrate uptake and inducer exclusion. The sequence is that of HPr kinase/phosphorylase from Pediococcus pentosaceus (strain ATCC 25745 / CCUG 21536 / LMG 10740 / 183-1w).